We begin with the raw amino-acid sequence, 634 residues long: MYHKTQHHRYIPGLDGLRAFAVLSVITYHLNFNWANGGFIGVDIFFVLSGYLITSILLPAYGNDINLDFRDFWVRRIRRLLPAAYLMIFSTVVWVVLFDRELLHTVRGDAISSLFYMSNWWFIFHKLSYFDSFGSPSPLKNLWSLAIEEQFYIIWPMFLVVGMYIMKSRARLAAVISLLVLCSAVMMSVLYEPGGDPSRVYYGTDTRSFELLIGCALALVWPMKRLSSNRLPSKLKHTLHATEFLAFCILVLCVYFTDEYEPFLYRGGMLFISVTAAILIACVCHPSSFLGNLLSWRPLRWLGTRSYGIYLWHYPVIVLSTPVQEIGNPVFWHIVLKVIVTCILAELSYHFIEKPIRTQGFRSFSRRVFIHRIKEWKTTSVISKMSIGFIIFAILIFAGGLSGLAGEQKHPTKWTYSSQETNADTSQASGDKKNAAADKKHNPEQKTTDSNQGQKENKDSGQETHKKKDTQSQQLKKPADTAKEVLAIGDSVMLDISSHLRQSFSNVTIDGKVGRQMSQALELAREYKSFNQPNKAVIIELGTNGYFTNSQIEQLLQSFSKAHIYLVNTRVPRQWESKVNESLQQQAHAHQNVTLVDWHTEALQHPEYFTPDGVHLVPKGAKTLTALIVQAMKS.

Helical transmembrane passes span 10–30 (YIPG…TYHL), 38–58 (GFIG…SILL), 79–99 (RLLP…VLFD), 110–130 (AISS…LSYF), 145–165 (LAIE…GMYI), 172–192 (LAAV…VLYE), 244–264 (FLAF…EPFL), 270–290 (LFIS…SSFL), 307–327 (YGIY…QEIG), 329–349 (PVFW…ELSY), and 385–405 (MSIG…SGLA). Residues 413-481 (KWTYSSQETN…SQQLKKPADT (69 aa)) are disordered. A compositionally biased stretch (polar residues) spans 414–429 (WTYSSQETNADTSQAS). 2 stretches are compositionally biased toward basic and acidic residues: residues 430 to 447 (GDKK…EQKT) and 455 to 470 (KENK…KKDT).

The protein belongs to the acyltransferase 3 family.

It localises to the cell membrane. The protein is Putative peptidoglycan O-acetyltransferase YrhL (yrhL) of Bacillus subtilis (strain 168).